The primary structure comprises 142 residues: Putative pre-16S rRNA nuclease (142 aa).

Belongs to the YqgF nuclease family.

It localises to the cytoplasm. Functionally, could be a nuclease involved in processing of the 5'-end of pre-16S rRNA. The polypeptide is Putative pre-16S rRNA nuclease (Chloroflexus aggregans (strain MD-66 / DSM 9485)).